The chain runs to 556 residues: MGKNGRLRWNPFSHRSSSSTSSSSRQQQQEQQPPVEFLCPISKSVMSDPVVVSSGQTFERVCVQVCRDLNFIPKLNDDEESLPDFSNIIPNLNMKSTIDTWCDTVGVSRPQPPDYSTVERILRQQMPPPDVEIRVSEQELLRAVAHRAPMIIHHADSELMGRRDFNNSTTSSDESVIVAHSPFTPLPLTTRPACFSPSPSSSSSEIETLTHHTFFSNSTSTATEEDEVIYNKLKSSEIFDQEQGLIMMRKMTRTNDEARVSLCSPRILSLLKNMIVSRYSLVQTNALASLVNLSLDKKNKLTIVRLGFVPILIDVLKSGSREAQEHAAGTIFSLSLEDDNKMPIGVLGALQPLLHALRAAESDRTRHDSALALYHLTLNQTNRSKLVRLGAVPALFSMVRSGESASRALLVICNLACCSEGRSAMLDANAVAILVGKLREEWTEEPTEARSSSSARENCVAALFALSHESLRFKGLAKEARAVEVLKEVEERGTERAREKAKKILQLMRERVPEDDEEDGEGSIDWDRVIDSNGSIRSRFRVGGRNRVVTQNSSGF.

The tract at residues 1-34 (MGKNGRLRWNPFSHRSSSSTSSSSRQQQQEQQPP) is disordered. Low complexity predominate over residues 13 to 32 (SHRSSSSTSSSSRQQQQEQQ). The U-box domain maps to 32-108 (QPPVEFLCPI…DTWCDTVGVS (77 aa)). 5 ARM repeats span residues 256–295 (DEARVSLCSPRILSLLKNMIVSRYSLVQTNALASLVNLSL), 297–336 (KKNKLTIVRLGFVPILIDVLKSGSREAQEHAAGTIFSLSL), 338–378 (DDNK…HLTL), 380–417 (QTNRSKLVRLGAVPALFSMVRSGESASRALLVICNLAC), and 418–468 (CSEG…ALSH).

In terms of assembly, binds to SD16, SD17, SD18 and SD129.

The catalysed reaction is S-ubiquitinyl-[E2 ubiquitin-conjugating enzyme]-L-cysteine + [acceptor protein]-L-lysine = [E2 ubiquitin-conjugating enzyme]-L-cysteine + N(6)-ubiquitinyl-[acceptor protein]-L-lysine.. It participates in protein modification; protein ubiquitination. Its function is as follows. Functions as an E3 ubiquitin ligase. The polypeptide is U-box domain-containing protein 38 (PUB38) (Arabidopsis thaliana (Mouse-ear cress)).